Here is a 197-residue protein sequence, read N- to C-terminus: ADP-ribosylation factor 1 (197 aa).

Residue Gly-2 is the site of N-myristoyl glycine attachment. Residues 24–31 (GLDAAGKT), 67–71 (DVGGQ), and 126–129 (NKQD) contribute to the GTP site.

It belongs to the small GTPase superfamily. Arf family.

The protein resides in the golgi apparatus. The enzyme catalyses GTP + H2O = GDP + phosphate + H(+). GTP-binding protein involved in protein trafficking; may modulate vesicle budding and uncoating within the Golgi apparatus. In Solanum tuberosum (Potato), this protein is ADP-ribosylation factor 1.